We begin with the raw amino-acid sequence, 319 residues long: tRNA uridine(34) hydroxylase (319 aa).

A Rhodanese domain is found at 124–218 (LDEDTVILDA…YGKNEETKGE (95 aa)). Catalysis depends on Cys-178, which acts as the Cysteine persulfide intermediate.

The protein belongs to the TrhO family.

The enzyme catalyses uridine(34) in tRNA + AH2 + O2 = 5-hydroxyuridine(34) in tRNA + A + H2O. Its function is as follows. Catalyzes oxygen-dependent 5-hydroxyuridine (ho5U) modification at position 34 in tRNAs. The sequence is that of tRNA uridine(34) hydroxylase from Listeria monocytogenes serotype 4b (strain CLIP80459).